The chain runs to 317 residues: Ribose-phosphate pyrophosphokinase A (317 aa).

3 residues coordinate Mg(2+): Asp130, His132, and Asp145. The tract at residues 212-227 (KDKVALIVDDMADTCG) is binding of phosphoribosylpyrophosphate.

This sequence belongs to the ribose-phosphate pyrophosphokinase family. The cofactor is Mg(2+).

The catalysed reaction is D-ribose 5-phosphate + ATP = 5-phospho-alpha-D-ribose 1-diphosphate + AMP + H(+). It functions in the pathway metabolic intermediate biosynthesis; 5-phospho-alpha-D-ribose 1-diphosphate biosynthesis; 5-phospho-alpha-D-ribose 1-diphosphate from D-ribose 5-phosphate (route I): step 1/1. In Dictyostelium discoideum (Social amoeba), this protein is Ribose-phosphate pyrophosphokinase A (prsA).